Consider the following 259-residue polypeptide: Truncated Ankyrin repeat protein OPG003 (259 aa).

The protein belongs to the orthopoxvirus OPG003 family.

This is Truncated Ankyrin repeat protein OPG003 (OPG003) from Vaccinia virus (strain Copenhagen) (VACV).